A 306-amino-acid chain; its full sequence is MIFQRTVQKMVKATGVGLHSGNKVTLSIMPAPVNTGIVLVRTDLSPAVAIPAKAEQVRETTMCTALVNDEGIRISTIEHLFAALAGLGIDNAVIEVDAPEIPIMDGSASPFVFLLQSAGIKEQAAPKKYLKIKRPVRVEDGDKWAELKPFKGFRVNFKIDFAHPEIARSQQHVVMDFSTSAFVKEISRARTFGFMRDIEYLRANNLALGGSMENAVVLDEYRVLNPDGLRYEDEFVKHKILDAFGDLYVAGHAILGEFTAYKTGHALNNQLVRALLAQQDAWELVSFEKEADVPVSFSVPSGAVFA.

Positions 79, 238, and 242 each coordinate Zn(2+). H265 functions as the Proton donor in the catalytic mechanism.

This sequence belongs to the LpxC family. Zn(2+) serves as cofactor.

It carries out the reaction a UDP-3-O-[(3R)-3-hydroxyacyl]-N-acetyl-alpha-D-glucosamine + H2O = a UDP-3-O-[(3R)-3-hydroxyacyl]-alpha-D-glucosamine + acetate. It functions in the pathway glycolipid biosynthesis; lipid IV(A) biosynthesis; lipid IV(A) from (3R)-3-hydroxytetradecanoyl-[acyl-carrier-protein] and UDP-N-acetyl-alpha-D-glucosamine: step 2/6. Functionally, catalyzes the hydrolysis of UDP-3-O-myristoyl-N-acetylglucosamine to form UDP-3-O-myristoylglucosamine and acetate, the committed step in lipid A biosynthesis. The sequence is that of UDP-3-O-acyl-N-acetylglucosamine deacetylase from Shewanella sp. (strain W3-18-1).